We begin with the raw amino-acid sequence, 148 residues long: Large ribosomal subunit protein bL9 (148 aa).

It belongs to the bacterial ribosomal protein bL9 family.

Binds to the 23S rRNA. The protein is Large ribosomal subunit protein bL9 of Syntrophobacter fumaroxidans (strain DSM 10017 / MPOB).